Here is a 468-residue protein sequence, read N- to C-terminus: ATP synthase subunit beta (468 aa).

148-155 serves as a coordination point for ATP; that stretch reads GGAGVGKT.

Belongs to the ATPase alpha/beta chains family. In terms of assembly, F-type ATPases have 2 components, CF(1) - the catalytic core - and CF(0) - the membrane proton channel. CF(1) has five subunits: alpha(3), beta(3), gamma(1), delta(1), epsilon(1). CF(0) has three main subunits: a(1), b(2) and c(9-12). The alpha and beta chains form an alternating ring which encloses part of the gamma chain. CF(1) is attached to CF(0) by a central stalk formed by the gamma and epsilon chains, while a peripheral stalk is formed by the delta and b chains.

Its subcellular location is the cell inner membrane. The catalysed reaction is ATP + H2O + 4 H(+)(in) = ADP + phosphate + 5 H(+)(out). Functionally, produces ATP from ADP in the presence of a proton gradient across the membrane. The catalytic sites are hosted primarily by the beta subunits. In Stenotrophomonas maltophilia (strain R551-3), this protein is ATP synthase subunit beta.